The following is a 709-amino-acid chain: Elongation factor G (709 aa).

The region spanning Ala-8 to Leu-297 is the tr-type G domain. Residues Ala-17–Thr-24, Asp-81–His-85, and Asn-135–Asp-138 each bind GTP.

The protein belongs to the TRAFAC class translation factor GTPase superfamily. Classic translation factor GTPase family. EF-G/EF-2 subfamily.

Its subcellular location is the cytoplasm. Functionally, catalyzes the GTP-dependent ribosomal translocation step during translation elongation. During this step, the ribosome changes from the pre-translocational (PRE) to the post-translocational (POST) state as the newly formed A-site-bound peptidyl-tRNA and P-site-bound deacylated tRNA move to the P and E sites, respectively. Catalyzes the coordinated movement of the two tRNA molecules, the mRNA and conformational changes in the ribosome. This chain is Elongation factor G, found in Lactococcus lactis subsp. cremoris (strain MG1363).